Here is a 477-residue protein sequence, read N- to C-terminus: ATP-dependent rRNA helicase RRP3 (477 aa).

The tract at residues 1–22 (MSVKVDGMINKKSKTHSKKLDA) is disordered. A Q motif motif is present at residues 65–93 (KSFNELKLIPELLEAIQQMKFTKPTPIQS). In terms of domain architecture, Helicase ATP-binding spans 96-267 (IPHALEGKDI…RASLHNPVRV (172 aa)). Position 109 to 116 (109 to 116 (AQTGSGKT)) interacts with ATP. The short motif at 215–218 (DEAD) is the DEAD box element. The Helicase C-terminal domain occupies 294–438 (YLIHLLNEFL…KDPSPSKAVL (145 aa)). The disordered stretch occupies residues 452–477 (AIRQTKDFHEKRNPKKNRDDRDREER).

Belongs to the DEAD box helicase family. DDX47/RRP3 subfamily. In terms of assembly, interacts with the SSU processome.

It localises to the nucleus. It carries out the reaction ATP + H2O = ADP + phosphate + H(+). ATP-dependent rRNA helicase required for pre-ribosomal RNA processing. Involved in the maturation of the 35S-pre-rRNA and to its cleavage to mature 18S rRNA. The polypeptide is ATP-dependent rRNA helicase RRP3 (Debaryomyces hansenii (strain ATCC 36239 / CBS 767 / BCRC 21394 / JCM 1990 / NBRC 0083 / IGC 2968) (Yeast)).